We begin with the raw amino-acid sequence, 160 residues long: Non-secretory ribonuclease (160 aa).

Positions 1–27 (MVPKLFTSPICLLLLLGLMGVEGSLHA) are cleaved as a signal peptide. C-linked (Man) tryptophan glycosylation is present at Trp-34. Residue His-42 is the Proton acceptor of the active site. Residue Asn-44 is glycosylated (N-linked (GlcNAc...) asparagine). Disulfide bonds link Cys-50-Cys-110, Cys-64-Cys-122, Cys-82-Cys-137, and Cys-89-Cys-98. A 3'-nitrotyrosine modification is found at Tyr-60. A substrate-binding site is contributed by 65–69 (KNQNT). Asn-92, Asn-111, Asn-118, and Asn-138 each carry an N-linked (GlcNAc...) asparagine glycan. His-155 functions as the Proton donor in the catalytic mechanism.

The protein belongs to the pancreatic ribonuclease family. As to quaternary structure, interacts with and forms a tight 1:1 complex with RNH1. Dimerization of two such complexes may occur.

It localises to the lysosome. Its subcellular location is the cytoplasmic granule. The enzyme catalyses an [RNA] containing cytidine + H2O = an [RNA]-3'-cytidine-3'-phosphate + a 5'-hydroxy-ribonucleotide-3'-[RNA].. It catalyses the reaction an [RNA] containing uridine + H2O = an [RNA]-3'-uridine-3'-phosphate + a 5'-hydroxy-ribonucleotide-3'-[RNA].. Functionally, this is a non-secretory ribonuclease. It is a pyrimidine specific nuclease with a slight preference for U. Cytotoxin and helminthotoxin. Possesses a wide variety of biological activities. The sequence is that of Non-secretory ribonuclease (RNASE2) from Chlorocebus aethiops (Green monkey).